The following is a 366-amino-acid chain: DNA-directed RNA polymerase subunit alpha (366 aa).

The tract at residues 1–260 (MAISDNGGGS…DQLQSFIGSE (260 aa)) is alpha N-terminal domain (alpha-NTD). An alpha C-terminal domain (alpha-CTD) region spans residues 274–366 (EGALPYDHNL…ENLSKQYSED (93 aa)).

Belongs to the RNA polymerase alpha chain family. Homodimer. The RNAP catalytic core consists of 2 alpha, 1 beta, 1 beta' and 1 omega subunit. When a sigma factor is associated with the core the holoenzyme is formed, which can initiate transcription.

It catalyses the reaction RNA(n) + a ribonucleoside 5'-triphosphate = RNA(n+1) + diphosphate. In terms of biological role, DNA-dependent RNA polymerase catalyzes the transcription of DNA into RNA using the four ribonucleoside triphosphates as substrates. This chain is DNA-directed RNA polymerase subunit alpha, found in Anaplasma marginale (strain St. Maries).